The sequence spans 209 residues: Large ribosomal subunit protein uL3 (209 aa).

The protein belongs to the universal ribosomal protein uL3 family. In terms of assembly, part of the 50S ribosomal subunit. Forms a cluster with proteins L14 and L19.

One of the primary rRNA binding proteins, it binds directly near the 3'-end of the 23S rRNA, where it nucleates assembly of the 50S subunit. The protein is Large ribosomal subunit protein uL3 of Carboxydothermus hydrogenoformans (strain ATCC BAA-161 / DSM 6008 / Z-2901).